The chain runs to 790 residues: Cadherin-18 (790 aa).

The signal sequence occupies residues 1 to 24; sequence MKITSTSCICPVLVCLCFVQRCYG. Positions 25 to 53 are excised as a propeptide; the sequence is TTHHGSIRGTRNQTKHIEGETEVHHRPKR. An N-linked (GlcNAc...) asparagine glycan is attached at asparagine 36. Cadherin domains lie at 54–159, 160–268, 269–383, 384–486, and 487–608; these read GWVW…APKF, TDGP…PPRF, PQKH…PPLF, SMPS…DNPP, and ELAR…FLSS. Over 54–608 the chain is Extracellular; it reads GWVWNQFFVL…TCHAEAFLSS (555 aa). N-linked (GlcNAc...) asparagine glycosylation occurs at asparagine 255. Asparagine 455 and asparagine 536 each carry an N-linked (GlcNAc...) asparagine glycan. The helical transmembrane segment at 609–636 threads the bilayer; that stretch reads AGLSTGALIAILLCVVILLAIVVLFITL. Topologically, residues 637–790 are cytoplasmic; it reads RRSKKEPLII…YGEIESERTT (154 aa). Serine 786 carries the phosphoserine modification.

The protein resides in the cell membrane. Its function is as follows. Cadherins are calcium-dependent cell adhesion proteins. They preferentially interact with themselves in a homophilic manner in connecting cells; cadherins may thus contribute to the sorting of heterogeneous cell types. This is Cadherin-18 (CDH18) from Bos taurus (Bovine).